The primary structure comprises 657 residues: Sodium/glucose cotransporter 4 (657 aa).

At 1 to 24 (MPASPEPVTATPEPEEVPAKFTLE) the chain is on the extracellular side. A helical transmembrane segment spans residues 25–45 (AADIAVVVVYFVFVLAVGIWS). Residues 46–79 (SIRANRGTVGGYFLAGRSMTWWPIGASLMSSNVG) are Cytoplasmic-facing. Residues 80–100 (SGLFIGLAGTGAAGGLAVGGF) traverse the membrane as a helical segment. Topologically, residues 101–104 (EWNA) are extracellular. A helical membrane pass occupies residues 105–125 (AWVLIALGWIFVPVYISAGVV). Topologically, residues 126–147 (TMPEYLRKRFGGQRIRIYMSVL) are cytoplasmic. Residues 148-168 (SLILYILTKISTDIFSGALFI) form a helical membrane-spanning segment. Residues 169-180 (QVSLGWDLYLST) lie on the Extracellular side of the membrane. Residues 181-201 (VILLAVTALYTIAGGLTAVIY) traverse the membrane as a helical segment. The Cytoplasmic portion of the chain corresponds to 202–207 (TDALQT). The helical transmembrane segment at 208–228 (VIMVIGAFVLMFIAFDKVGWY) threads the bilayer. The Extracellular portion of the chain corresponds to 229–265 (EGLLVQYEKAAPALTVPNTTCHLPRSDAFHIFRDPVT). The N-linked (GlcNAc...) asparagine glycan is linked to Asn-246. A helical membrane pass occupies residues 266–286 (GDIPWPGLIFGLTVLATWVWC). Over 287–307 (TDQVIVQRSLSAKNLSHAKAG) the chain is Cytoplasmic. Residues 308–328 (SVLGGYLKVFPMFFVVMPGMI) traverse the membrane as a helical segment. The Extracellular segment spans residues 329 to 373 (SRALYPDEVACVDPDECQKICGAKVGCSNIAYPKLVVELMPVGMR). The chain crosses the membrane as a helical span at residues 374 to 396 (GLMIAVMMAALMSSLTSIFNSSS). Residues 397-417 (TLFTMDIWQRIRPRASEKELM) are Cytoplasmic-facing. Residues 418–438 (VVGRVFILLLVALSIVWIPVI) traverse the membrane as a helical segment. Residues 439 to 451 (QTANSGQLFDYIQ) are Extracellular-facing. The helical transmembrane segment at 452 to 472 (AITSFLSPPITTVFIMAIFWG) threads the bilayer. Residues 473–478 (RVNEQG) are Cytoplasmic-facing. Residues 479-499 (AFWGLMVGLVVGMVRMIMEFV) traverse the membrane as a helical segment. Topologically, residues 500 to 520 (YGTPSCGETDLRPSLLKDVHY) are extracellular. A helical membrane pass occupies residues 521-541 (LYFALILLALTVLIITAVSLC). At 542–636 (TAPIPEKHLV…SIEEDHMWKT (95 aa)) the chain is on the cytoplasmic side. The chain crosses the membrane as a helical span at residues 637–657 (VCNVNALILLTANVFLWGYFA).

It belongs to the sodium:solute symporter (SSF) (TC 2.A.21) family.

Its subcellular location is the membrane. In terms of biological role, probable sodium-dependent sugar transporter. The chain is Sodium/glucose cotransporter 4 (slc5a9) from Danio rerio (Zebrafish).